The chain runs to 250 residues: rRNA methyltransferase 2, mitochondrial (250 aa).

The transit peptide at 1-35 (MRLVFTGNCVFKRLLHTEIGGKYAKQQPRNLKGRS) directs the protein to the mitochondrion. S-adenosyl-L-methionine-binding positions include 90–93 (PGSW), Asp-119, 136–137 (DF), and Asp-161. Lys-201 serves as the catalytic Proton acceptor.

Belongs to the class I-like SAM-binding methyltransferase superfamily. RNA methyltransferase RlmE family.

It is found in the mitochondrion. It carries out the reaction a uridine in rRNA + S-adenosyl-L-methionine = a 2'-O-methyluridine in rRNA + S-adenosyl-L-homocysteine + H(+). S-adenosyl-L-methionine-dependent 2'-O-ribose methyltransferase that catalyzes the formation of 2'-O-methyluridine at position 1579 (Um1579) in the mitochondrial large subunit ribosomal RNA (mtLSU rRNA), a universally conserved modification in the peptidyl transferase domain of the mtLSU rRNA. This activity may require prior 2'-O-methylguanosine modification at position 1580 (Gm1580) by MRM3. Essential for late-stage assembly of mtLSU required for efficient translation of mitochondrial DNA encoded proteins; methyltransferase activity is not required for this function. Essential for mitochondrial respiratory function. The sequence is that of rRNA methyltransferase 2, mitochondrial from Drosophila melanogaster (Fruit fly).